Reading from the N-terminus, the 101-residue chain is NADH-quinone oxidoreductase subunit K (101 aa).

Helical transmembrane passes span 4-24 (LGHL…GIFL), 30-50 (IVLL…FIAF), and 62-82 (FVFF…AILV).

It belongs to the complex I subunit 4L family. NDH-1 is composed of 14 different subunits. Subunits NuoA, H, J, K, L, M, N constitute the membrane sector of the complex.

The protein resides in the cell inner membrane. It catalyses the reaction a quinone + NADH + 5 H(+)(in) = a quinol + NAD(+) + 4 H(+)(out). Its function is as follows. NDH-1 shuttles electrons from NADH, via FMN and iron-sulfur (Fe-S) centers, to quinones in the respiratory chain. The immediate electron acceptor for the enzyme in this species is believed to be ubiquinone. Couples the redox reaction to proton translocation (for every two electrons transferred, four hydrogen ions are translocated across the cytoplasmic membrane), and thus conserves the redox energy in a proton gradient. This Xylella fastidiosa (strain Temecula1 / ATCC 700964) protein is NADH-quinone oxidoreductase subunit K.